A 668-amino-acid chain; its full sequence is Protein ENTREP3 (668 aa).

The next 3 helical transmembrane spans lie at L34–V54, S67–W87, and F91–A111. An N-linked (GlcNAc...) asparagine glycan is attached at N160. The chain crosses the membrane as a helical span at residues L174–V194. Phosphoserine is present on residues S358 and S389. Disordered regions lie at residues F386 to A419, R442 to T503, and S550 to A570. Positions A398 to P407 are enriched in low complexity. The residue at position 493 (S493) is a Phosphoserine. The residue at position 574 (S574) is a Phosphoserine. 2 disordered regions span residues K597–P620 and G645–L668. Positions H655 to L668 are enriched in polar residues.

This sequence belongs to the ENTREP family. May interact with WWOX. Widely expressed.

It is found in the membrane. This is Protein ENTREP3 from Homo sapiens (Human).